Reading from the N-terminus, the 449-residue chain is Chromogranin-A (449 aa).

A signal peptide spans 1–18; that stretch reads MRSAAVLALLLCAGQVIA. Cysteines 35 and 56 form a disulfide. The tract at residues 87–431 is disordered; that stretch reads AKERTHQQKK…EDQELESLSA (345 aa). Residue Ser99 is modified to Phosphoserine. Residues 107-140 show a composition bias toward basic and acidic residues; it reads VLEKPNDQAEPKEVTEEVSSKDAAEKRDDFKEVE. Residue Ser142 is modified to Phosphoserine. The O-linked (GalNAc...) serine glycan is linked to Ser185. A Phosphotyrosine modification is found at Tyr191. Residue Ser200 is modified to Phosphoserine. Ser204 carries an O-linked (GalNAc...) serine glycan. Position 215 is a phosphoserine (Ser215). Residues 233–242 show a composition bias toward basic and acidic residues; it reads EAEAREKAVP. Thr249 carries an O-linked (GalNAc...) threonine glycan. Over residues 279–297 the composition is skewed to basic and acidic residues; sequence GAEEAKPPEGKGEWAHSRQ. A Phosphoserine modification is found at Ser295. Position 312 is a glycine amide (Gly312). Residues Ser315, Ser325, and Ser363 each carry the phosphoserine modification. The segment covering 323 to 351 has biased composition (basic and acidic residues); sequence QLSKEWEDAKRWSKMDQLAKELTAEKRLE. Met364 carries the methionine sulfoxide modification. A phosphoserine mark is found at Ser390, Ser394, Ser416, and Ser430. Positions 406–423 are enriched in basic and acidic residues; it reads YPEEKKEEEGSANRRPED. Ser416 carries an O-linked (Xyl...) (chondroitin sulfate) serine glycan.

Belongs to the chromogranin/secretogranin protein family. Self-interacts; self-assembly is promoted in vitro by chondroitin sulfate attachment which occurs at mildly acidic pH conditions. Interacts with SCG3. Interacts with ITPR1 in the secretory granules. Post-translationally, in secretory granules, is attacked at both N- and C-terminal sides by proteolytic enzymes generating numerous peptides of various activities. Proteolytic processing can give rise to additional longer forms of catestatin peptides which display a less potent catecholamine release-inhibitory activity. In terms of processing, O-glycosylated; contains chondroitin sulfate (CS). CS attachment is pH-dependent, being observed at mildly acidic conditions of pH 5 but not at neutral pH, and promotes self-assembly in vitro. Highest concentration of GE-25 found in adrenal medulla with lower levels present in the pituitary, the intestinal mucosa and the pancreas. Also found in the brain.

Its subcellular location is the secreted. The protein resides in the cytoplasmic vesicle. The protein localises to the secretory vesicle. It localises to the neuronal dense core vesicle. Its function is as follows. Strongly inhibits glucose induced insulin release from the pancreas. Completely inhibits catecholamine release from chromaffin cells. Functionally, has antibacterial activity against M.luteus. Not active against E.coli. In terms of biological role, inhibits catecholamine release from chromaffin cells and noradrenergic neurons by acting as a non-competitive nicotinic cholinergic antagonist. Displays antibacterial activity against Gram-positive bacteria M.luteus and B.megaterium, and Gram-negative bacteria E.coli, and antifungal activity against a variety of filamentous fungi including A.fumigatus, N.hematococca, F.culmorum, F.oxyporum, T.mentagrophytes and several forms of Candida: C.albicans, C.tropicalis, C.glabrata and C.neoform. Can induce mast cell migration, degranulation and production of cytokines and chemokines. Its function is as follows. Has antibacterial activity against Gram-positive bacteria M.luteus, B.megaterium. Not active against Gram-positive bacteria B.cereus, B.subtilis, S.pyogenes, M.fortuitum, S.aureus and L.monocytogenes and against Gram-negative bacteria E.coli, E.cloacae, S.typhimurium, K.pneumoniae and P.aeruginosa. Possesses antifungal activity against N.crassa, A.fumigatus, A.brassicicola, N.hematococca, F.culmorum and F.oxyporum and against the yeast S.cerevisiae and C.albicans. Inactive against A.benhamiae. Has antifungal activity against N.crassa, A.fumigatus, A.brassicicola, N.hematococca, F.culmorum, F.oxyporum, A.benhamiae, C.neoformans, as well as against yeasts C.albicans, and C.tropicalis. Seems to be inactive against C.glabrata. Interacts with the fungal cell wall, crosses the plasma membrane and accumulates in fungal cells where it inhibits calcineurin activity. Functionally, regulates granule biogenesis in endocrine cells by up-regulating the transcription of protease nexin 1 (SERPINE2) via a cAMP-PKA-SP1 pathway. This leads to inhibition of granule protein degradation in the Golgi complex which in turn promotes granule formation. This is Chromogranin-A (CHGA) from Bos taurus (Bovine).